The primary structure comprises 153 residues: UPF0251 protein CT0950 (153 aa).

It belongs to the UPF0251 family.

The sequence is that of UPF0251 protein CT0950 from Chlorobaculum tepidum (strain ATCC 49652 / DSM 12025 / NBRC 103806 / TLS) (Chlorobium tepidum).